The primary structure comprises 1005 residues: DNA double-strand break repair Rad50 ATPase (1005 aa).

ATP is bound by residues K14, 35–40 (GSGKSS), 62–64 (ITK), and Q134. Coiled-coil stretches lie at residues 189 to 230 (KENY…IEKL), 292 to 321 (LVDE…KQLE), 346 to 379 (LDTL…EIEK), and 404 to 498 (AVEY…LKEV). Residues 457 to 554 (IEEKKKVLEN…DIEKLKKEID (98 aa)) form the Zinc-hook domain. Residues C502 and C505 each coordinate Zn(2+). Coiled coils occupy residues 523–600 (TQLN…YVIN), 656–692 (KEKC…ELIE), and 800–834 (RQEL…LKEM).

The protein belongs to the SMC family. RAD50 subfamily. In terms of assembly, homodimer. Forms a heterotetramer composed of two Mre11 subunits and two Rad50 subunits. Zn(2+) serves as cofactor.

Its function is as follows. Part of the Rad50/Mre11 complex, which is involved in the early steps of DNA double-strand break (DSB) repair. The complex may facilitate opening of the processed DNA ends to aid in the recruitment of HerA and NurA. Rad50 controls the balance between DNA end bridging and DNA resection via ATP-dependent structural rearrangements of the Rad50/Mre11 complex. This chain is DNA double-strand break repair Rad50 ATPase, found in Methanocaldococcus jannaschii (strain ATCC 43067 / DSM 2661 / JAL-1 / JCM 10045 / NBRC 100440) (Methanococcus jannaschii).